The primary structure comprises 718 residues: MALALSVAPTSSSLSSLLSRTPNPSPNFRTTHLNFGSQRRIYTINPLLRSFKCLQSSSRDVNASPFSISAIASSSSSSQTTELVPYKLQRLVKEFKSLTEPIDRLKWVLHYASLLPQMPESSKTESNRVMGCTARVWLDAELGQDGKMRFCADSDSDVSKGMCSCLIQVLDEASPVEVMELKTEDLAELNVGLLGGERSRVNTWYNVLVSMQKKTRRLVAEREGKVPSFEPFPSLVLTAHGIEAKGSFAQAQAKYLFPEESRVEELVNVLKEKKIGVVAHFYMDPEVQGVLTAAQKHWPHISISDSLVMADSAVTMAKAGCQFITVLGVDFMSENVRAILDQAGFEKVGVYRMSDETIGCSLADAASAPAYLNYLEAASRSPPSLHVVYINTSLETKAFAHELVPTITCTSSNVVQTILQAFAQMPELTVWYGPDSYMGANIVKLFQQMTLMTNEEIANIHPKHSLDSIKSLLPRLHYFQEGTCIVHHLFGHEVVERIKYMYCDAFLTAHLEVPGEMFSLAMEAKKREMGVVGSTQNILDFIKQKVQEAVDRNVDDHLQFVLGTESGMVTSIVAVIRSLLGSSANSKLKVEVVFPVSSDSMTKTSSDSSNSIKVGDVALPVVPGVAGGEGCSIHGGCASCPYMKMNSLSSLLKVCHKLPDLENVYGGFIAERFKRQTPQGKLIADVGCEPILHMRHFQANKELPDKLVHQVLSCESKR.

The segment covering Met-1 to Pro-22 has biased composition (low complexity). The segment at Met-1 to Arg-29 is disordered. Residues Met-1 to Ala-70 constitute a chloroplast transit peptide. Cys-132 functions as the Cysteine persulfide intermediate in the catalytic mechanism. 2 residues coordinate iminosuccinate: His-280 and Ser-306. Residue Cys-360 participates in [4Fe-4S] cluster binding. Iminosuccinate contacts are provided by residues Tyr-389–Asn-391 and Ser-411. [4Fe-4S] cluster is bound at residue Cys-484. Iminosuccinate is bound by residues His-510–Glu-512 and Thr-535. [4Fe-4S] cluster is bound at residue Cys-640.

This sequence belongs to the quinolinate synthase family. Type 1 subfamily. As to quaternary structure, homodimer. Interacts in vitro with NFS2, CpNIFS3 and AO. Part of a Cys defulfurase complex. The cofactor is [4Fe-4S] cluster. As to expression, expressed in roots, leaves, stems and flowers.

It is found in the plastid. The protein resides in the chloroplast. The enzyme catalyses iminosuccinate + dihydroxyacetone phosphate = quinolinate + phosphate + 2 H2O + H(+). The protein operates within cofactor biosynthesis; NAD(+) biosynthesis; quinolinate from iminoaspartate: step 1/1. Catalyzes the condensation of iminoaspartate with dihydroxyacetone phosphate to form quinolinate. Can complement nadA-deficient E.coli mutant. Essential for the de novo synthesis of NAD. Also participates in cysteine desulfurization mediated by NFS2. Can activate the cysteine desulfurase activity of NFS2 in vitro. The protein is Quinolinate synthase, chloroplastic of Arabidopsis thaliana (Mouse-ear cress).